The following is a 304-amino-acid chain: Undecaprenyl-diphosphatase (304 aa).

A run of 8 helical transmembrane segments spans residues Phe5–Pro25, Gly47–Leu67, Ile72–Ser92, Phe111–Asp131, Leu137–Ile157, Ile209–Gly231, Thr248–Ile268, and Phe283–Ile303.

Belongs to the UppP family.

It localises to the cell membrane. It carries out the reaction di-trans,octa-cis-undecaprenyl diphosphate + H2O = di-trans,octa-cis-undecaprenyl phosphate + phosphate + H(+). Catalyzes the dephosphorylation of undecaprenyl diphosphate (UPP). Confers resistance to bacitracin. The protein is Undecaprenyl-diphosphatase of Clostridium perfringens (strain 13 / Type A).